The primary structure comprises 309 residues: tRNA uridine(34) hydroxylase (309 aa).

One can recognise a Rhodanese domain in the interval 137–232 (RGDEVVFFDG…YGEKYGDKGL (96 aa)). Residue Cys192 is the Cysteine persulfide intermediate of the active site.

The protein belongs to the TrhO family.

The enzyme catalyses uridine(34) in tRNA + AH2 + O2 = 5-hydroxyuridine(34) in tRNA + A + H2O. In terms of biological role, catalyzes oxygen-dependent 5-hydroxyuridine (ho5U) modification at position 34 in tRNAs. The polypeptide is tRNA uridine(34) hydroxylase (Corynebacterium jeikeium (strain K411)).